We begin with the raw amino-acid sequence, 390 residues long: Formate-dependent phosphoribosylglycinamide formyltransferase (390 aa).

Residues glutamate 18–leucine 19 and glutamate 78 contribute to the N(1)-(5-phospho-beta-D-ribosyl)glycinamide site. ATP contacts are provided by residues arginine 110, lysine 151, serine 156–glutamine 161, glutamate 191–leucine 194, and glutamate 199. The region spanning aspartate 115–leucine 305 is the ATP-grasp domain. Mg(2+) contacts are provided by glutamate 264 and glutamate 276. Residues aspartate 283, lysine 353, and arginine 360–arginine 361 contribute to the N(1)-(5-phospho-beta-D-ribosyl)glycinamide site.

It belongs to the PurK/PurT family. In terms of assembly, homodimer.

The enzyme catalyses N(1)-(5-phospho-beta-D-ribosyl)glycinamide + formate + ATP = N(2)-formyl-N(1)-(5-phospho-beta-D-ribosyl)glycinamide + ADP + phosphate + H(+). It functions in the pathway purine metabolism; IMP biosynthesis via de novo pathway; N(2)-formyl-N(1)-(5-phospho-D-ribosyl)glycinamide from N(1)-(5-phospho-D-ribosyl)glycinamide (formate route): step 1/1. Its function is as follows. Involved in the de novo purine biosynthesis. Catalyzes the transfer of formate to 5-phospho-ribosyl-glycinamide (GAR), producing 5-phospho-ribosyl-N-formylglycinamide (FGAR). Formate is provided by PurU via hydrolysis of 10-formyl-tetrahydrofolate. This chain is Formate-dependent phosphoribosylglycinamide formyltransferase, found in Prochlorococcus marinus (strain MIT 9515).